A 329-amino-acid polypeptide reads, in one-letter code: Glycerol-3-phosphate dehydrogenase [NAD(P)+] (329 aa).

The NADPH site is built by W11, R30, and K103. Sn-glycerol 3-phosphate-binding residues include K103, G132, and S134. A136 provides a ligand contact to NADPH. Sn-glycerol 3-phosphate is bound by residues K187, D240, S250, R251, and N252. The Proton acceptor role is filled by K187. Position 251 (R251) interacts with NADPH. The NADPH site is built by V275 and E277.

This sequence belongs to the NAD-dependent glycerol-3-phosphate dehydrogenase family.

It is found in the cytoplasm. The catalysed reaction is sn-glycerol 3-phosphate + NAD(+) = dihydroxyacetone phosphate + NADH + H(+). The enzyme catalyses sn-glycerol 3-phosphate + NADP(+) = dihydroxyacetone phosphate + NADPH + H(+). The protein operates within membrane lipid metabolism; glycerophospholipid metabolism. Its function is as follows. Catalyzes the reduction of the glycolytic intermediate dihydroxyacetone phosphate (DHAP) to sn-glycerol 3-phosphate (G3P), the key precursor for phospholipid synthesis. This is Glycerol-3-phosphate dehydrogenase [NAD(P)+] from Dechloromonas aromatica (strain RCB).